The sequence spans 323 residues: DNA repair and recombination protein RadA (323 aa).

115 to 122 is an ATP binding site; sequence GEFGSGKT.

The protein belongs to the eukaryotic RecA-like protein family.

Its function is as follows. Involved in DNA repair and in homologous recombination. Binds and assemble on single-stranded DNA to form a nucleoprotein filament. Hydrolyzes ATP in a ssDNA-dependent manner and promotes DNA strand exchange between homologous DNA molecules. The protein is DNA repair and recombination protein RadA of Thermoplasma volcanium (strain ATCC 51530 / DSM 4299 / JCM 9571 / NBRC 15438 / GSS1).